The chain runs to 239 residues: ATP-dependent dethiobiotin synthetase BioD (239 aa).

ATP is bound at residue 15-20; the sequence is EIGKTF. Mg(2+) is bound at residue threonine 19. Lysine 40 is an active-site residue. ATP-binding positions include aspartate 57, 118–121, and 178–179; these read EGVG and NH. Residues aspartate 57 and glutamate 118 each coordinate Mg(2+).

Belongs to the dethiobiotin synthetase family. As to quaternary structure, homodimer. Mg(2+) serves as cofactor.

Its subcellular location is the cytoplasm. The enzyme catalyses (7R,8S)-7,8-diammoniononanoate + CO2 + ATP = (4R,5S)-dethiobiotin + ADP + phosphate + 3 H(+). The protein operates within cofactor biosynthesis; biotin biosynthesis; biotin from 7,8-diaminononanoate: step 1/2. Functionally, catalyzes a mechanistically unusual reaction, the ATP-dependent insertion of CO2 between the N7 and N8 nitrogen atoms of 7,8-diaminopelargonic acid (DAPA, also called 7,8-diammoniononanoate) to form a ureido ring. In Burkholderia cenocepacia (strain ATCC BAA-245 / DSM 16553 / LMG 16656 / NCTC 13227 / J2315 / CF5610) (Burkholderia cepacia (strain J2315)), this protein is ATP-dependent dethiobiotin synthetase BioD.